A 506-amino-acid chain; its full sequence is Photosystem II CP47 reaction center protein (506 aa).

6 consecutive transmembrane segments (helical) span residues 21-36, 101-115, 140-156, 203-218, 237-252, and 457-472; these read SVHI…WAGS, ILFS…IWHW, GIHL…FGAF, IAAG…FHLS, VLSS…AFVV, and SFAL…HGAR.

Belongs to the PsbB/PsbC family. PsbB subfamily. As to quaternary structure, PSII is composed of 1 copy each of membrane proteins PsbA, PsbB, PsbC, PsbD, PsbE, PsbF, PsbH, PsbI, PsbJ, PsbK, PsbL, PsbM, PsbT, PsbX, PsbY, PsbZ, Psb30/Ycf12, at least 3 peripheral proteins of the oxygen-evolving complex and a large number of cofactors. It forms dimeric complexes. It depends on Binds multiple chlorophylls. PSII binds additional chlorophylls, carotenoids and specific lipids. as a cofactor.

It localises to the plastid. The protein localises to the chloroplast thylakoid membrane. In terms of biological role, one of the components of the core complex of photosystem II (PSII). It binds chlorophyll and helps catalyze the primary light-induced photochemical processes of PSII. PSII is a light-driven water:plastoquinone oxidoreductase, using light energy to abstract electrons from H(2)O, generating O(2) and a proton gradient subsequently used for ATP formation. This chain is Photosystem II CP47 reaction center protein, found in Cucumis sativus (Cucumber).